The following is a 286-amino-acid chain: Aminoglycoside N(3)-acetyltransferase III (286 aa).

Belongs to the antibiotic N-acetyltransferase family.

It carries out the reaction a 2-deoxystreptamine antibiotic + acetyl-CoA = an N(3)-acetyl-2-deoxystreptamine antibiotic + CoA + H(+). Resistance to antibiotics containing the 2-deoxy-streptamine ring including gentamicin, kanamycin, tobramycin, neomycin and apramycin. The chain is Aminoglycoside N(3)-acetyltransferase III (aacC3) from Salmonella sp.